We begin with the raw amino-acid sequence, 446 residues long: NADH-quinone oxidoreductase subunit D (446 aa).

The protein belongs to the complex I 49 kDa subunit family. NDH-1 is composed of 14 different subunits. Subunits NuoB, C, D, E, F, and G constitute the peripheral sector of the complex.

It localises to the cell membrane. The catalysed reaction is a quinone + NADH + 5 H(+)(in) = a quinol + NAD(+) + 4 H(+)(out). Functionally, NDH-1 shuttles electrons from NADH, via FMN and iron-sulfur (Fe-S) centers, to quinones in the respiratory chain. The immediate electron acceptor for the enzyme in this species is believed to be a menaquinone. Couples the redox reaction to proton translocation (for every two electrons transferred, four hydrogen ions are translocated across the cytoplasmic membrane), and thus conserves the redox energy in a proton gradient. The polypeptide is NADH-quinone oxidoreductase subunit D (Nocardioides sp. (strain ATCC BAA-499 / JS614)).